The chain runs to 368 residues: tRNA-specific 2-thiouridylase MnmA (368 aa).

Residues 6 to 13 (ALSGGVDS) and Met-32 contribute to the ATP site. Cys-92 acts as the Nucleophile in catalysis. A disulfide bridge connects residues Cys-92 and Cys-186. Gly-116 is a binding site for ATP. The interaction with tRNA stretch occupies residues 134–136 (KDQ). Cys-186 acts as the Cysteine persulfide intermediate in catalysis. The tract at residues 292-293 (RY) is interaction with tRNA.

This sequence belongs to the MnmA/TRMU family.

The protein resides in the cytoplasm. The catalysed reaction is S-sulfanyl-L-cysteinyl-[protein] + uridine(34) in tRNA + AH2 + ATP = 2-thiouridine(34) in tRNA + L-cysteinyl-[protein] + A + AMP + diphosphate + H(+). Its function is as follows. Catalyzes the 2-thiolation of uridine at the wobble position (U34) of tRNA, leading to the formation of s(2)U34. This is tRNA-specific 2-thiouridylase MnmA from Campylobacter hominis (strain ATCC BAA-381 / DSM 21671 / CCUG 45161 / LMG 19568 / NCTC 13146 / CH001A).